Reading from the N-terminus, the 177-residue chain is Adenine phosphoribosyltransferase (177 aa).

Belongs to the purine/pyrimidine phosphoribosyltransferase family. Homodimer.

It localises to the cytoplasm. The enzyme catalyses AMP + diphosphate = 5-phospho-alpha-D-ribose 1-diphosphate + adenine. It functions in the pathway purine metabolism; AMP biosynthesis via salvage pathway; AMP from adenine: step 1/1. Its function is as follows. Catalyzes a salvage reaction resulting in the formation of AMP, that is energically less costly than de novo synthesis. The polypeptide is Adenine phosphoribosyltransferase (Chlorobaculum tepidum (strain ATCC 49652 / DSM 12025 / NBRC 103806 / TLS) (Chlorobium tepidum)).